An 877-amino-acid polypeptide reads, in one-letter code: DNA repair protein rad16 (877 aa).

S71 carries the phosphoserine; by CK2 modification. The segment at 440–490 (SKSIKKPEPSKEREASNTTSRKGVPPSKRRRVRGGNNATSRTTSDNTDAND) is disordered. Over residues 444–454 (KKPEPSKEREA) the composition is skewed to basic and acidic residues. Residues 475 to 490 (NNATSRTTSDNTDAND) show a composition bias toward polar residues. The ERCC4 domain occupies 652-732 (RVIVDLREFR…IPVLLIEFEQ (81 aa)).

This sequence belongs to the XPF family. In terms of assembly, heterodimer composed of rad16 and swi10.

It localises to the nucleus. The protein resides in the cytoplasm. The protein localises to the cytoskeleton. It is found in the microtubule organizing center. Its subcellular location is the spindle pole body. Functionally, endonuclease that specifically degrades single-stranded DNA and which is involved in nucleotide excision repair of DNA damaged with UV light, bulky adducts, or cross-linking agents. Required for double strand break-induced interchromosomal gene conversion. This chain is DNA repair protein rad16 (rad16), found in Schizosaccharomyces pombe (strain 972 / ATCC 24843) (Fission yeast).